The primary structure comprises 414 residues: Putative F-box/kelch-repeat protein At2g29800 (414 aa).

Positions 1–61 (MASISETSDD…EVENVPPIPR (61 aa)) are disordered. Over residues 20-35 (KPEEPHKNPQEEKENQ) the composition is skewed to basic and acidic residues. A compositionally biased stretch (acidic residues) spans 40 to 54 (NEADEEDDHQDEEVE). The 48-residue stretch at 58-105 (PIPRKIPPVLIENTIAPLRRCHYPKLSLLSNAFRQVISSEDLFQVRSL) folds into the F-box domain. Kelch repeat units follow at residues 163–211 (KIYV…VIDG), 212–258 (RIYV…IVHV), 263–302 (KIYIMDGDYCFAYDPRRRRWETWGPESAQRSYWHLSSCVV), and 305–349 (LLYA…SKMA).

The chain is Putative F-box/kelch-repeat protein At2g29800 from Arabidopsis thaliana (Mouse-ear cress).